Consider the following 491-residue polypeptide: Protein nucleotidyltransferase YdiU (491 aa).

G94, G96, R97, K117, D129, G130, R180, and R187 together coordinate ATP. The active-site Proton acceptor is D256. Mg(2+)-binding residues include N257 and D266. ATP is bound at residue D266.

It belongs to the SELO family. It depends on Mg(2+) as a cofactor. The cofactor is Mn(2+).

It catalyses the reaction L-seryl-[protein] + ATP = 3-O-(5'-adenylyl)-L-seryl-[protein] + diphosphate. The enzyme catalyses L-threonyl-[protein] + ATP = 3-O-(5'-adenylyl)-L-threonyl-[protein] + diphosphate. The catalysed reaction is L-tyrosyl-[protein] + ATP = O-(5'-adenylyl)-L-tyrosyl-[protein] + diphosphate. It carries out the reaction L-histidyl-[protein] + UTP = N(tele)-(5'-uridylyl)-L-histidyl-[protein] + diphosphate. It catalyses the reaction L-seryl-[protein] + UTP = O-(5'-uridylyl)-L-seryl-[protein] + diphosphate. The enzyme catalyses L-tyrosyl-[protein] + UTP = O-(5'-uridylyl)-L-tyrosyl-[protein] + diphosphate. Functionally, nucleotidyltransferase involved in the post-translational modification of proteins. It can catalyze the addition of adenosine monophosphate (AMP) or uridine monophosphate (UMP) to a protein, resulting in modifications known as AMPylation and UMPylation. In Clostridium botulinum (strain Okra / Type B1), this protein is Protein nucleotidyltransferase YdiU.